The sequence spans 399 residues: S-adenosylmethionine synthase (399 aa).

Histidine 17 contacts ATP. Aspartate 19 is a binding site for Mg(2+). Glutamate 45 contributes to the K(+) binding site. Residues glutamate 58 and glutamine 101 each contribute to the L-methionine site. The interval 101–111 (QSADIAMGVDQ) is flexible loop. ATP contacts are provided by residues 177 to 179 (DGK), 244 to 245 (RF), aspartate 253, 259 to 260 (RK), alanine 276, and lysine 280. Aspartate 253 lines the L-methionine pocket. Lysine 284 serves as a coordination point for L-methionine.

Belongs to the AdoMet synthase family. Homotetramer; dimer of dimers. Mg(2+) is required as a cofactor. It depends on K(+) as a cofactor.

It is found in the cytoplasm. It catalyses the reaction L-methionine + ATP + H2O = S-adenosyl-L-methionine + phosphate + diphosphate. It functions in the pathway amino-acid biosynthesis; S-adenosyl-L-methionine biosynthesis; S-adenosyl-L-methionine from L-methionine: step 1/1. Its function is as follows. Catalyzes the formation of S-adenosylmethionine (AdoMet) from methionine and ATP. The overall synthetic reaction is composed of two sequential steps, AdoMet formation and the subsequent tripolyphosphate hydrolysis which occurs prior to release of AdoMet from the enzyme. This is S-adenosylmethionine synthase from Bacillus thuringiensis subsp. konkukian (strain 97-27).